Reading from the N-terminus, the 286-residue chain is ATP phosphoribosyltransferase (286 aa).

The protein belongs to the ATP phosphoribosyltransferase family. Long subfamily. Requires Mg(2+) as cofactor.

The protein localises to the cytoplasm. The catalysed reaction is 1-(5-phospho-beta-D-ribosyl)-ATP + diphosphate = 5-phospho-alpha-D-ribose 1-diphosphate + ATP. It functions in the pathway amino-acid biosynthesis; L-histidine biosynthesis; L-histidine from 5-phospho-alpha-D-ribose 1-diphosphate: step 1/9. Its activity is regulated as follows. Feedback inhibited by histidine. Its function is as follows. Catalyzes the condensation of ATP and 5-phosphoribose 1-diphosphate to form N'-(5'-phosphoribosyl)-ATP (PR-ATP). Has a crucial role in the pathway because the rate of histidine biosynthesis seems to be controlled primarily by regulation of HisG enzymatic activity. In Arthrobacter sp. (strain FB24), this protein is ATP phosphoribosyltransferase.